The chain runs to 122 residues: Acidic phospholipase A2 (122 aa).

Intrachain disulfides connect Cys-26-Cys-115, Cys-28-Cys-44, Cys-43-Cys-95, Cys-49-Cys-122, Cys-50-Cys-88, Cys-57-Cys-81, and Cys-75-Cys-86. Positions 27, 29, and 31 each coordinate Ca(2+). His-47 is a catalytic residue. Asp-48 contacts Ca(2+). Residue Asp-89 is part of the active site.

The cofactor is Ca(2+). Expressed by the venom gland.

Its subcellular location is the secreted. It catalyses the reaction a 1,2-diacyl-sn-glycero-3-phosphocholine + H2O = a 1-acyl-sn-glycero-3-phosphocholine + a fatty acid + H(+). Functionally, PLA2 catalyzes the calcium-dependent hydrolysis of the 2-acyl groups in 3-sn-phosphoglycerides. The polypeptide is Acidic phospholipase A2 (Lachesis stenophrys (Central American bushmaster)).